A 307-amino-acid chain; its full sequence is Membrane protein insertase YidC 2 (307 aa).

The N-terminal stretch at 1-23 is a signal peptide; the sequence is MKLTLNRILFSGLALSILLTLTG. A lipid anchor (N-palmitoyl cysteine) is attached at cysteine 24. Cysteine 24 carries S-diacylglycerol cysteine lipidation. Helical transmembrane passes span 58–78, 135–155, 179–199, 209–225, and 231–251; these read LGYGLAIIIVTIIVRTLILPL, LGGIGCLPLLIQMPFFSAMYF, VLTAIIAALYFFQSWLSMMAV, TMMYTMPIMMIFMSFSL, and LYWLVGGFFSIIQQLITTYLL. Positions 263–307 are disordered; the sequence is YAKNPPKAYQSTSSRKDVTPSQNMEQANLPKKIKSNRNAGKQRKR. Residues 271–288 show a composition bias toward polar residues; sequence YQSTSSRKDVTPSQNMEQ. Positions 293-307 are enriched in basic residues; sequence KKIKSNRNAGKQRKR.

It belongs to the OXA1/ALB3/YidC family. Type 2 subfamily.

The protein resides in the cell membrane. Functionally, required for the insertion and/or proper folding and/or complex formation of integral membrane proteins into the membrane. Involved in integration of membrane proteins that insert both dependently and independently of the Sec translocase complex, as well as at least some lipoproteins. In Streptococcus pyogenes serotype M1, this protein is Membrane protein insertase YidC 2.